Here is a 316-residue protein sequence, read N- to C-terminus: Phosphate acetyltransferase (316 aa).

Belongs to the phosphate acetyltransferase and butyryltransferase family.

Its subcellular location is the cytoplasm. The enzyme catalyses acetyl-CoA + phosphate = acetyl phosphate + CoA. It participates in metabolic intermediate biosynthesis; acetyl-CoA biosynthesis; acetyl-CoA from acetate: step 2/2. In Rhizobium meliloti (Ensifer meliloti), this protein is Phosphate acetyltransferase (pta).